The chain runs to 770 residues: Low-density lipoprotein receptor-related protein 3 (770 aa).

The first 36 residues, 1-36 (MEKRAAAGLEGAPGARAQLAVVCLVNIFLTGRLSSA), serve as a signal peptide directing secretion. At 37-496 (VPALAACSGK…HGCLAAVPRK (460 aa)) the chain is on the extracellular side. Cystine bridges form between C43-C72, C99-C120, C166-C178, C173-C191, C185-C200, C212-C227, C219-C240, C234-C249, and C254-C282. The CUB 1 domain maps to 43–159 (CSGKLEQHTE…QGFRLSYIRG (117 aa)). Residue N71 is glycosylated (N-linked (GlcNAc...) asparagine). LDL-receptor class A domains are found at residues 165-201 (SCQA…GNCS) and 211-250 (LCPG…AGCP). N199 carries N-linked (GlcNAc...) asparagine glycosylation. Residues 254-365 (CGRRLGSFYG…HGFNATYQVK (112 aa)) enclose the CUB 2 domain. A glycan (N-linked (GlcNAc...) asparagine) is linked at N359. LDL-receptor class A domains lie at 415–453 (ACPP…KNCF) and 454–490 (SCQP…HGCL). Cystine bridges form between C416–C430, C423–C443, C437–C452, C455–C467, C462–C480, and C474–C489. A helical membrane pass occupies residues 497–517 (VITAALIGSLVCGLLLVIALG). At 518-770 (CAFKLYSLRT…ASDDEALLVC (253 aa)) the chain is on the cytoplasmic side. The tract at residues 635–770 (LGDGFLQPAP…ASDDEALLVC (136 aa)) is disordered. The span at 689-707 (RDPECRPVDKDRKVCREPL) shows a compositional bias: basic and acidic residues. Over residues 729–738 (QVSTASSTLG) the composition is skewed to polar residues. Residues 761–770 (ASDDEALLVC) show a composition bias toward acidic residues.

This sequence belongs to the LDLR family. In terms of assembly, binds GGA1 and GGA2. As to expression, widely expressed. Highly expressed in skeletal muscle and ovary. Expressed at intermediate level in heart, brain, liver, pancreas, prostate and small intestine. Weakly expressed in testis, colon and leukocyte.

Its subcellular location is the membrane. The protein resides in the coated pit. Probable receptor, which may be involved in the internalization of lipophilic molecules and/or signal transduction. Its precise role is however unclear, since it does not bind to very low density lipoprotein (VLDL) or to LRPAP1 in vitro. The polypeptide is Low-density lipoprotein receptor-related protein 3 (LRP3) (Homo sapiens (Human)).